The following is a 206-amino-acid chain: Glycerol-3-phosphate acyltransferase (206 aa).

The next 6 helical transmembrane spans lie at 4–24 (TAFA…AVIV), 53–73 (LAAA…VALA), 86–106 (GIAL…FFGF), 116–136 (VGIL…TWLF), 137–157 (MAFV…LAPV), and 160–180 (FFIL…AIVV).

The protein belongs to the PlsY family. In terms of assembly, probably interacts with PlsX.

It is found in the cell inner membrane. It catalyses the reaction an acyl phosphate + sn-glycerol 3-phosphate = a 1-acyl-sn-glycero-3-phosphate + phosphate. Its pathway is lipid metabolism; phospholipid metabolism. Functionally, catalyzes the transfer of an acyl group from acyl-phosphate (acyl-PO(4)) to glycerol-3-phosphate (G3P) to form lysophosphatidic acid (LPA). This enzyme utilizes acyl-phosphate as fatty acyl donor, but not acyl-CoA or acyl-ACP. The polypeptide is Glycerol-3-phosphate acyltransferase (Chromobacterium violaceum (strain ATCC 12472 / DSM 30191 / JCM 1249 / CCUG 213 / NBRC 12614 / NCIMB 9131 / NCTC 9757 / MK)).